The sequence spans 130 residues: Small ribosomal subunit protein uS13 (130 aa).

Positions Pro97–Thr116 are enriched in basic residues. The disordered stretch occupies residues Pro97–Lys130. The segment covering Lys121–Lys130 has biased composition (polar residues).

It belongs to the universal ribosomal protein uS13 family. In terms of assembly, part of the 30S ribosomal subunit. Forms a loose heterodimer with protein S19. Forms two bridges to the 50S subunit in the 70S ribosome.

In terms of biological role, located at the top of the head of the 30S subunit, it contacts several helices of the 16S rRNA. In the 70S ribosome it contacts the 23S rRNA (bridge B1a) and protein L5 of the 50S subunit (bridge B1b), connecting the 2 subunits; these bridges are implicated in subunit movement. Contacts the tRNAs in the A and P-sites. The protein is Small ribosomal subunit protein uS13 of Endomicrobium trichonymphae.